The chain runs to 258 residues: Imidazole glycerol phosphate synthase subunit HisF (258 aa).

Catalysis depends on residues D12 and D131.

This sequence belongs to the HisA/HisF family. As to quaternary structure, heterodimer of HisH and HisF.

It localises to the cytoplasm. The enzyme catalyses 5-[(5-phospho-1-deoxy-D-ribulos-1-ylimino)methylamino]-1-(5-phospho-beta-D-ribosyl)imidazole-4-carboxamide + L-glutamine = D-erythro-1-(imidazol-4-yl)glycerol 3-phosphate + 5-amino-1-(5-phospho-beta-D-ribosyl)imidazole-4-carboxamide + L-glutamate + H(+). The protein operates within amino-acid biosynthesis; L-histidine biosynthesis; L-histidine from 5-phospho-alpha-D-ribose 1-diphosphate: step 5/9. IGPS catalyzes the conversion of PRFAR and glutamine to IGP, AICAR and glutamate. The HisF subunit catalyzes the cyclization activity that produces IGP and AICAR from PRFAR using the ammonia provided by the HisH subunit. This chain is Imidazole glycerol phosphate synthase subunit HisF, found in Nocardioides sp. (strain ATCC BAA-499 / JS614).